The chain runs to 115 residues: Immunoglobulin kappa chain variable 12-41 (115 aa).

The signal sequence occupies residues 1-20; that stretch reads MSVLTQVLALLLLWLTGARC. The framework-1 stretch occupies residues 21-43; the sequence is DIQMTQSPASLSASVGETVTITC. Cysteines 43 and 108 form a disulfide. The tract at residues 44-54 is complementarity-determining-1; the sequence is RASGNIHNYLA. A framework-2 region spans residues 55 to 69; sequence WYQQKQGKSPQLLVY. The interval 70-76 is complementarity-determining-2; sequence NAKTLAD. A framework-3 region spans residues 77-108; sequence GVPSRFSGSGSGTQYSLKINSLQPEDFGSYYC. Positions 109 to 115 are complementarity-determining-3; it reads QHFWSTP.

This is Immunoglobulin kappa chain variable 12-41 from Mus musculus (Mouse).